Here is a 489-residue protein sequence, read N- to C-terminus: MFS-type transporter MFS19 (489 aa).

The segment covering 1-12 (MAHSTAGDRDPE) has biased composition (basic and acidic residues). The segment at 1 to 42 (MAHSTAGDRDPEVGSEQHSSIAQLHTESMSDPWGDSNSPENP) is disordered. The segment covering 16–41 (EQHSSIAQLHTESMSDPWGDSNSPEN) has biased composition (polar residues). Residues 52–72 (FHVAIVSIFTLTANLAATMFA) traverse the membrane as a helical segment. Residues asparagine 83 and asparagine 86 are each glycosylated (N-linked (GlcNAc...) asparagine). Helical transmembrane passes span 91–111 (AMTV…LAPL), 127–147 (VYIA…FLVF), 149–169 (FLCG…VADI), 180–200 (ALFA…GGYV), 208–228 (WTFR…MFFM), 282–302 (PIVL…FLLF), 321–341 (GLAY…FSIL), 361–381 (LILM…YGWS), 388–408 (WIVP…VVIP), 425–445 (ALAA…LVAA), and 454–474 (GWGN…PWLF).

It belongs to the major facilitator superfamily.

The protein localises to the cell membrane. Its function is as follows. MFS-type efflux pump involved in the modulation susceptibility to various compounds including cumyl hydroperoxide, potassium superoxide, many singlet oxygen-generating compounds (eosin Y, rose Bengal, hematoporphyrin, methylene blue, and cercosporin), and the cell wall biosynthesis inhibitor Congo red. Involved in oxidative stress tolerance, colonization, and lesion formation. This Alternaria alternata (Alternaria rot fungus) protein is MFS-type transporter MFS19.